The chain runs to 60 residues: Cytotoxin 3 (60 aa).

4 cysteine pairs are disulfide-bonded: Cys-3–Cys-21, Cys-14–Cys-38, Cys-42–Cys-53, and Cys-54–Cys-59.

The protein belongs to the three-finger toxin family. Short-chain subfamily. Type IA cytotoxin sub-subfamily. In terms of assembly, monomer in solution; Homodimer and oligomer in the presence of negatively charged lipids forming a pore with a size ranging between 20 and 30 Angstroms. As to expression, expressed by the venom gland.

The protein resides in the secreted. The protein localises to the target cell membrane. Shows cytolytic activity on many different cells by forming pore in lipid membranes. In vivo, increases heart rate or kills the animal by cardiac arrest. In addition, it binds to heparin with high affinity, interacts with Kv channel-interacting protein 1 (KCNIP1) in a calcium-independent manner, and binds to integrin alpha-V/beta-3 (ITGAV/ITGB3) with moderate affinity. The chain is Cytotoxin 3 from Naja naja (Indian cobra).